The following is a 518-amino-acid chain: Arrestin-related trafficking adapter 10 (518 aa).

Lysine 118 is covalently cross-linked (Glycyl lysine isopeptide (Lys-Gly) (interchain with G-Cter in ubiquitin)).

Belongs to the ART10 family. In terms of assembly, interacts with RSP5. Post-translationally, ubiquitinated by RSP5.

It localises to the cytoplasm. Its function is as follows. May regulate endocytosis by recruiting RSP5 ubiquitin ligase activity to specific plasma membrane proteins in response to extracellular stimuli. This is Arrestin-related trafficking adapter 10 (ART10) from Saccharomyces cerevisiae (strain YJM789) (Baker's yeast).